The sequence spans 97 residues: Late embryogenesis abundant protein Lea5 (97 aa).

Belongs to the LEA type 3 family.

The polypeptide is Late embryogenesis abundant protein Lea5 (LEA5) (Citrus sinensis (Sweet orange)).